We begin with the raw amino-acid sequence, 960 residues long: Mast/stem cell growth factor receptor Kit (960 aa).

Residues 1–24 (MEGAHLAWELAHAVLLLSLIPAGG) form the signal peptide. The Extracellular segment spans residues 25–511 (SVPHEESSLV…IRTHTLFTPL (487 aa)). Ig-like C2-type domains are found at residues 27-102 (PHEE…VFVK), 111-194 (DSLI…LNVR), 201-294 (PVIT…LKAL), 303-396 (ATMN…VYVK), and 399-497 (PEIL…FNFA). Cystine bridges form between Cys-45–Cys-87, Cys-126–Cys-175, Cys-141–Cys-172, and Cys-222–Cys-276. N-linked (GlcNAc...) asparagine glycans are attached at residues Asn-76, Asn-135, Asn-149, Asn-269, Asn-286, Asn-306, Asn-318, Asn-338, Asn-343, Asn-356, Asn-453, and Asn-469. Cys-414 and Cys-481 are oxidised to a cystine. A helical transmembrane segment spans residues 512-532 (LIAFGVAAGLMCIIVMILVYI). Over 533 to 960 (YLQKPKYEVQ…TQPLLVREDV (428 aa)) the chain is Cytoplasmic. Tyr-554 is a binding site for Mg(2+). Phosphotyrosine; by autocatalysis occurs at positions 554 and 556. One can recognise a Protein kinase domain in the interval 575-913 (LSFGKTLGAG…QIVQLIEQQL (339 aa)). ATP is bound by residues 582–589 (GAGAFGKV), Lys-609, and 657–663 (EYCCYGD). Residues Tyr-689 and Tyr-706 each carry the phosphotyrosine; by autocatalysis modification. Asp-777 acts as the Proton acceptor in catalysis. Arg-781 contributes to the ATP binding site. Mg(2+)-binding residues include Asn-782 and Asp-795. Tyr-808 and Tyr-921 each carry phosphotyrosine; by autocatalysis.

It belongs to the protein kinase superfamily. Tyr protein kinase family. CSF-1/PDGF receptor subfamily. In terms of processing, ubiquitinated. KIT is rapidly ubiquitinated after autophosphorylation induced by KITLG/SCF binding, leading to internalization and degradation. Autophosphorylated on tyrosine residues. KITLG/SCF binding promotes autophosphorylation. Phosphorylated tyrosine residues are important for interaction with specific binding partners. As to expression, high in the brain and testes and also present in the bursa of Fabricus, heart, kidney, lung, spleen thymus and ovary.

The protein localises to the cell membrane. The catalysed reaction is L-tyrosyl-[protein] + ATP = O-phospho-L-tyrosyl-[protein] + ADP + H(+). Its function is as follows. Tyrosine-protein kinase that acts as a cell-surface receptor for the cytokine KITLG/SCF and plays an essential role in the regulation of cell survival and proliferation, hematopoiesis, stem cell maintenance, gametogenesis, mast cell development, migration and function, and in melanogenesis. In response to KITLG/SCF binding, KIT can activate several signaling pathways. Promotes phosphorylation of PIK3R1, the regulatory subunit of phosphatidylinositol 3-kinase, and subsequent activation of the kinase AKT1. Activated KIT also transmits signals via GRB2 and activation of RAS, RAF1 and the MAP kinases MAPK1/ERK2 and/or MAPK3/ERK1. Promotes activation of STAT family members STAT1, STAT3, STAT5A and STAT5B. KIT promotes activation of PLCG1, leading to the production of the cellular signaling molecules diacylglycerol and inositol 1,4,5-trisphosphate. KIT signaling is modulated by protein phosphatases, and by rapid internalization and degradation of the receptor. In Gallus gallus (Chicken), this protein is Mast/stem cell growth factor receptor Kit (KIT).